Consider the following 398-residue polypeptide: Putative F-box protein At4g17780 (398 aa).

An F-box domain is found at 8 to 55 (PSSIYIVADLLEDIFLRLPLKSILISKSVSKRWRSILESKTFVERRMS).

The sequence is that of Putative F-box protein At4g17780 from Arabidopsis thaliana (Mouse-ear cress).